The sequence spans 291 residues: 33 kDa chaperonin (291 aa).

2 disulfides stabilise this stretch: Cys-236–Cys-238 and Cys-269–Cys-272.

It belongs to the HSP33 family. Post-translationally, under oxidizing conditions two disulfide bonds are formed involving the reactive cysteines. Under reducing conditions zinc is bound to the reactive cysteines and the protein is inactive.

It is found in the cytoplasm. Redox regulated molecular chaperone. Protects both thermally unfolding and oxidatively damaged proteins from irreversible aggregation. Plays an important role in the bacterial defense system toward oxidative stress. The polypeptide is 33 kDa chaperonin (Lactobacillus johnsonii (strain CNCM I-12250 / La1 / NCC 533)).